The following is a 532-amino-acid chain: Probable G-protein coupled receptor Mth-like 11 (532 aa).

The first 20 residues, 1–20 (MGMFRVEYLLLGILVIGVRS), serve as a signal peptide directing secretion. At 21–229 (RDIPNCDFFD…VRKSRLSNAS (209 aa)) the chain is on the extracellular side. 5 disulfide bridges follow: C26–C80, C82–C87, C91–C184, C92–C103, and C145–C204. An N-linked (GlcNAc...) asparagine glycan is attached at N42. N-linked (GlcNAc...) asparagine glycosylation is found at N110, N123, N166, N195, and N227. The helical transmembrane segment at 230 to 250 (IPVKFSSVFFMVITIAAYLWL) threads the bilayer. Residues 251–262 (PKFRSLHGKCCN) are Cytoplasmic-facing. The chain crosses the membrane as a helical span at residues 263–283 (LYFICLAITFLLNVISLFGIF). Topologically, residues 284–290 (ELKTPIC) are extracellular. A helical membrane pass occupies residues 291–311 (YLTGYAGYFTVMATFLWLSVI). Residues 312–339 (SFDVWRRFAMRKFQVFYKNKRSSFFNYN) lie on the Cytoplasmic side of the membrane. Residues 340-360 (IIVWSSAGLLTCIIFLVDQFV) traverse the membrane as a helical segment. At 361 to 386 (ETNLDNPYNPAVGVFSCWIFTNGWSA) the chain is on the extracellular side. A helical membrane pass occupies residues 387 to 407 (TFYFYAPLAILIILNCASFFL). Residues 408–439 (TTRYIYVENKQNQKVLNNSEPQKLSRNHANYR) lie on the Cytoplasmic side of the membrane. Residues 440-460 (IYFRLFIIMGGSWFLEIIAFI) form a helical membrane-spanning segment. Residues 461–469 (CEMENMWKP) lie on the Extracellular side of the membrane. A helical transmembrane segment spans residues 470-490 (LIILNDYINCSQGIIIFVATF). The Cytoplasmic portion of the chain corresponds to 491–532 (CNHEMFRLIRKRIQNRNITSLELTNTSRPVESEKMADVELGK).

It belongs to the G-protein coupled receptor 2 family. Mth subfamily.

Its subcellular location is the cell membrane. The sequence is that of Probable G-protein coupled receptor Mth-like 11 (mthl11) from Drosophila melanogaster (Fruit fly).